The following is a 339-amino-acid chain: Phosphate acyltransferase (339 aa).

Belongs to the PlsX family. Homodimer. Probably interacts with PlsY.

Its subcellular location is the cytoplasm. It catalyses the reaction a fatty acyl-[ACP] + phosphate = an acyl phosphate + holo-[ACP]. It functions in the pathway lipid metabolism; phospholipid metabolism. Functionally, catalyzes the reversible formation of acyl-phosphate (acyl-PO(4)) from acyl-[acyl-carrier-protein] (acyl-ACP). This enzyme utilizes acyl-ACP as fatty acyl donor, but not acyl-CoA. This chain is Phosphate acyltransferase, found in Methylococcus capsulatus (strain ATCC 33009 / NCIMB 11132 / Bath).